A 295-amino-acid polypeptide reads, in one-letter code: MLYQQIAKNKRKTVLVMAGFVFLAGLIGAAIGYAFMGSAQTGIIIAVVVGIVYMFVILGQSTDVVMSMNNAQEITEQQAPELWHIVEDMAMVGKVPMPRVFIIDDPSPNAFATGPDPEHAAVAATTGILQRLNREELEGVMAHEVSHIRNYDIRLQTYALALASVISFLANMGMNAMWWGGGRRDDRDNGNAGQVIMLLLSVLAIILGPLAASMAQMALSRNREYLADASAVELTRNPQGLINALRKISMSEPMQNADPSSASMYIANPFKDGSWTHLFDTHPPIEKRIDRLEHM.

The next 2 membrane-spanning stretches (helical) occupy residues 15-35 (LVMA…GYAF) and 39-59 (AQTG…VILG). Histidine 143 is a Zn(2+) binding site. Residue glutamate 144 is part of the active site. Position 147 (histidine 147) interacts with Zn(2+). Helical transmembrane passes span 159-179 (ALAL…AMWW) and 195-215 (VIML…ASMA). Residue glutamate 224 participates in Zn(2+) binding.

It belongs to the peptidase M48B family. It depends on Zn(2+) as a cofactor.

It is found in the cell membrane. The protein is Protease HtpX homolog of Ligilactobacillus salivarius (strain UCC118) (Lactobacillus salivarius).